Consider the following 132-residue polypeptide: Small ribosomal subunit protein uS8 (132 aa).

It belongs to the universal ribosomal protein uS8 family. In terms of assembly, part of the 30S ribosomal subunit. Contacts proteins S5 and S12.

Functionally, one of the primary rRNA binding proteins, it binds directly to 16S rRNA central domain where it helps coordinate assembly of the platform of the 30S subunit. This chain is Small ribosomal subunit protein uS8, found in Ehrlichia ruminantium (strain Welgevonden).